The chain runs to 212 residues: ATP-dependent dethiobiotin synthetase BioD (212 aa).

Residue 12–17 (DCGKTF) coordinates ATP. Mg(2+) is bound at residue T16. Residue K33 is part of the active site. S37 serves as a coordination point for substrate. ATP is bound by residues D50, 110 to 113 (EGAG), and 170 to 171 (NC). Mg(2+)-binding residues include D50 and E110.

The protein belongs to the dethiobiotin synthetase family. In terms of assembly, homodimer. The cofactor is Mg(2+).

The protein resides in the cytoplasm. The enzyme catalyses (7R,8S)-7,8-diammoniononanoate + CO2 + ATP = (4R,5S)-dethiobiotin + ADP + phosphate + 3 H(+). It functions in the pathway cofactor biosynthesis; biotin biosynthesis; biotin from 7,8-diaminononanoate: step 1/2. Its function is as follows. Catalyzes a mechanistically unusual reaction, the ATP-dependent insertion of CO2 between the N7 and N8 nitrogen atoms of 7,8-diaminopelargonic acid (DAPA, also called 7,8-diammoniononanoate) to form a ureido ring. This Legionella pneumophila (strain Corby) protein is ATP-dependent dethiobiotin synthetase BioD.